Here is a 296-residue protein sequence, read N- to C-terminus: Formamidopyrimidine-DNA glycosylase (296 aa).

The Schiff-base intermediate with DNA role is filled by proline 2. Catalysis depends on glutamate 3, which acts as the Proton donor. Lysine 58 functions as the Proton donor; for beta-elimination activity in the catalytic mechanism. DNA-binding residues include histidine 104, arginine 126, and lysine 169. The FPG-type zinc finger occupies 260–296 (SVYDREGQACGTPGCGGTVARIVQAGRSTFYCAACQK). Arginine 286 (proton donor; for delta-elimination activity) is an active-site residue.

Belongs to the FPG family. Monomer. Requires Zn(2+) as cofactor.

It carries out the reaction Hydrolysis of DNA containing ring-opened 7-methylguanine residues, releasing 2,6-diamino-4-hydroxy-5-(N-methyl)formamidopyrimidine.. It catalyses the reaction 2'-deoxyribonucleotide-(2'-deoxyribose 5'-phosphate)-2'-deoxyribonucleotide-DNA = a 3'-end 2'-deoxyribonucleotide-(2,3-dehydro-2,3-deoxyribose 5'-phosphate)-DNA + a 5'-end 5'-phospho-2'-deoxyribonucleoside-DNA + H(+). Its function is as follows. Involved in base excision repair of DNA damaged by oxidation or by mutagenic agents. Acts as a DNA glycosylase that recognizes and removes damaged bases. Has a preference for oxidized purines, such as 7,8-dihydro-8-oxoguanine (8-oxoG). Has AP (apurinic/apyrimidinic) lyase activity and introduces nicks in the DNA strand. Cleaves the DNA backbone by beta-delta elimination to generate a single-strand break at the site of the removed base with both 3'- and 5'-phosphates. The sequence is that of Formamidopyrimidine-DNA glycosylase from Rhizobium etli (strain ATCC 51251 / DSM 11541 / JCM 21823 / NBRC 15573 / CFN 42).